Consider the following 654-residue polypeptide: DNA-directed RNA polymerase III subunit RPC3 (654 aa).

Thr-27 bears the Phosphothreonine mark. 2 disordered regions span residues 381 to 401 (LSRK…ASLP) and 422 to 448 (KSLQ…EDPH). Phosphoserine occurs at positions 392 and 394. Residues 429-444 (DTQEEDEEEEDLDADT) are compositionally biased toward acidic residues. Positions 581 to 602 (LEWNMANLLFKKEKLKQENSTL) are leucine-zipper.

Belongs to the RNA polymerase beta chain family. In terms of assembly, component of the RNA polymerase III (Pol III) complex consisting of 17 subunits.

It localises to the cytoplasm. The protein resides in the nucleus. Functionally, DNA-dependent RNA polymerase catalyzes the transcription of DNA into RNA using the four ribonucleoside triphosphates as substrates. Specific core component of RNA polymerase III which synthesizes small RNAs, such as 5S rRNA and tRNAs. The polypeptide is DNA-directed RNA polymerase III subunit RPC3 (RPC82) (Saccharomyces cerevisiae (strain YJM789) (Baker's yeast)).